A 205-amino-acid chain; its full sequence is Ribonuclease HII (205 aa).

Residues 22-205 form the RNase H type-2 domain; that stretch reads RFICGVDEAG…RKSFLKNILR (184 aa). 3 residues coordinate a divalent metal cation: aspartate 28, glutamate 29, and aspartate 120.

It belongs to the RNase HII family. Requires Mn(2+) as cofactor. It depends on Mg(2+) as a cofactor.

It localises to the cytoplasm. The enzyme catalyses Endonucleolytic cleavage to 5'-phosphomonoester.. Its function is as follows. Endonuclease that specifically degrades the RNA of RNA-DNA hybrids. The protein is Ribonuclease HII of Caldicellulosiruptor saccharolyticus (strain ATCC 43494 / DSM 8903 / Tp8T 6331).